The primary structure comprises 505 residues: tRNA-2-methylthio-N(6)-dimethylallyladenosine synthase (505 aa).

The MTTase N-terminal domain occupies 14–132 (RTYEVRTYGC…LPVLLERARV (119 aa)). 6 residues coordinate [4Fe-4S] cluster: C23, C61, C95, C169, C173, and C176. Residues 155-386 (RESAYAAWVS…ALQEEISWDE (232 aa)) enclose the Radical SAM core domain. A TRAM domain is found at 388 to 456 (KKQVGRTLEL…PHHLLAEGAV (69 aa)).

Belongs to the methylthiotransferase family. MiaB subfamily. Monomer. It depends on [4Fe-4S] cluster as a cofactor.

It is found in the cytoplasm. It catalyses the reaction N(6)-dimethylallyladenosine(37) in tRNA + (sulfur carrier)-SH + AH2 + 2 S-adenosyl-L-methionine = 2-methylsulfanyl-N(6)-dimethylallyladenosine(37) in tRNA + (sulfur carrier)-H + 5'-deoxyadenosine + L-methionine + A + S-adenosyl-L-homocysteine + 2 H(+). Catalyzes the methylthiolation of N6-(dimethylallyl)adenosine (i(6)A), leading to the formation of 2-methylthio-N6-(dimethylallyl)adenosine (ms(2)i(6)A) at position 37 in tRNAs that read codons beginning with uridine. The protein is tRNA-2-methylthio-N(6)-dimethylallyladenosine synthase of Streptomyces coelicolor (strain ATCC BAA-471 / A3(2) / M145).